We begin with the raw amino-acid sequence, 213 residues long: Chromosome segregation in meiosis protein 2 (213 aa).

The protein belongs to the CSM2 family. In terms of assembly, component of the SHU complex composed of at least CSM2, PSY3, SHU1 and SHU2.

The protein resides in the cytoplasm. Its subcellular location is the nucleus. Involved in chromosome segregation during meiosis. Promotes efficient recombinational repair and functions in the protection of the genome from spontaneous and induced DNA damage like mutations and gross chromosomal rearrangements (GCRs). This is Chromosome segregation in meiosis protein 2 (CSM2) from Saccharomyces cerevisiae (strain ATCC 204508 / S288c) (Baker's yeast).